A 294-amino-acid polypeptide reads, in one-letter code: Putative HTH-type transcriptional regulatory protein STK_12680 (294 aa).

The 53-residue stretch at 123–175 (LKKKREEMGLSLGEVAQALGVSRISIYDYEREDSYVSIDIAEKLVELFGDDIL) folds into the HTH cro/C1-type domain. The segment at residues 134-153 (LGEVAQALGVSRISIYDYER) is a DNA-binding region (H-T-H motif).

This chain is Putative HTH-type transcriptional regulatory protein STK_12680, found in Sulfurisphaera tokodaii (strain DSM 16993 / JCM 10545 / NBRC 100140 / 7) (Sulfolobus tokodaii).